Here is a 373-residue protein sequence, read N- to C-terminus: tRNA-specific 2-thiouridylase MnmA (373 aa).

ATP contacts are provided by residues 12 to 19 (GMSGGVDS) and methionine 38. Residues 98–100 (NPD) form an interaction with target base in tRNA region. Cysteine 103 functions as the Nucleophile in the catalytic mechanism. The cysteines at positions 103 and 200 are disulfide-linked. Glycine 127 contacts ATP. Residues 150 to 152 (KDQ) are interaction with tRNA. Cysteine 200 functions as the Cysteine persulfide intermediate in the catalytic mechanism. The interval 312–313 (RY) is interaction with tRNA.

This sequence belongs to the MnmA/TRMU family.

Its subcellular location is the cytoplasm. It carries out the reaction S-sulfanyl-L-cysteinyl-[protein] + uridine(34) in tRNA + AH2 + ATP = 2-thiouridine(34) in tRNA + L-cysteinyl-[protein] + A + AMP + diphosphate + H(+). Its function is as follows. Catalyzes the 2-thiolation of uridine at the wobble position (U34) of tRNA, leading to the formation of s(2)U34. The protein is tRNA-specific 2-thiouridylase MnmA of Streptococcus pneumoniae (strain JJA).